We begin with the raw amino-acid sequence, 227 residues long: Cytochrome c oxidase subunit 2 (227 aa).

Residues 1-14 (MAYPFQLGLQDATS) are Mitochondrial intermembrane-facing. A helical transmembrane segment spans residues 15–45 (PIMEELLHFHDHTLMIVFLISSLVLYIISLM). The Mitochondrial matrix segment spans residues 46–59 (LTTKLTHTSTMDAQ). Residues 60-87 (EVETVWTILPAIILILIALPSLRILYMM) traverse the membrane as a helical segment. The Mitochondrial intermembrane segment spans residues 88-227 (DEINNPSLTV…YFETWSAVMV (140 aa)). Cu cation-binding residues include His161, Cys196, Glu198, Cys200, His204, and Met207. Residue Glu198 participates in Mg(2+) binding. Tyr218 carries the phosphotyrosine modification.

The protein belongs to the cytochrome c oxidase subunit 2 family. As to quaternary structure, component of the cytochrome c oxidase (complex IV, CIV), a multisubunit enzyme composed of 14 subunits. The complex is composed of a catalytic core of 3 subunits MT-CO1, MT-CO2 and MT-CO3, encoded in the mitochondrial DNA, and 11 supernumerary subunits COX4I, COX5A, COX5B, COX6A, COX6B, COX6C, COX7A, COX7B, COX7C, COX8 and NDUFA4, which are encoded in the nuclear genome. The complex exists as a monomer or a dimer and forms supercomplexes (SCs) in the inner mitochondrial membrane with NADH-ubiquinone oxidoreductase (complex I, CI) and ubiquinol-cytochrome c oxidoreductase (cytochrome b-c1 complex, complex III, CIII), resulting in different assemblies (supercomplex SCI(1)III(2)IV(1) and megacomplex MCI(2)III(2)IV(2)). Found in a complex with TMEM177, COA6, COX18, COX20, SCO1 and SCO2. Interacts with TMEM177 in a COX20-dependent manner. Interacts with COX20. Interacts with COX16. The cofactor is Cu cation.

The protein localises to the mitochondrion inner membrane. The catalysed reaction is 4 Fe(II)-[cytochrome c] + O2 + 8 H(+)(in) = 4 Fe(III)-[cytochrome c] + 2 H2O + 4 H(+)(out). In terms of biological role, component of the cytochrome c oxidase, the last enzyme in the mitochondrial electron transport chain which drives oxidative phosphorylation. The respiratory chain contains 3 multisubunit complexes succinate dehydrogenase (complex II, CII), ubiquinol-cytochrome c oxidoreductase (cytochrome b-c1 complex, complex III, CIII) and cytochrome c oxidase (complex IV, CIV), that cooperate to transfer electrons derived from NADH and succinate to molecular oxygen, creating an electrochemical gradient over the inner membrane that drives transmembrane transport and the ATP synthase. Cytochrome c oxidase is the component of the respiratory chain that catalyzes the reduction of oxygen to water. Electrons originating from reduced cytochrome c in the intermembrane space (IMS) are transferred via the dinuclear copper A center (CU(A)) of subunit 2 and heme A of subunit 1 to the active site in subunit 1, a binuclear center (BNC) formed by heme A3 and copper B (CU(B)). The BNC reduces molecular oxygen to 2 water molecules using 4 electrons from cytochrome c in the IMS and 4 protons from the mitochondrial matrix. This Lycalopex vetulus (Hoary fox) protein is Cytochrome c oxidase subunit 2 (MT-CO2).